A 306-amino-acid polypeptide reads, in one-letter code: MTTAGYYAAVDWGTSSFRLWIIGEDGAVLAERRSAEGMTTAAKTGFHTILDGHLAAVSAPAHLPIIICGMAGARQGWKEAGYIETPAALAEIAGRATAIPDVDRDIRILPGLAQRDRRHPDVMRGEETQLLGAAAHLGAGSHLVCMPGTHSKWVRLADDRVEGFSTFMTGELFDTIARHTILSHAVAEADTFAAGSAAFTDAVSRTRENPALATNLLFSVRAGQLLHGTAAADARAQLSGTLIGLEIAGALAGSGSVDGVCLVGSGGLGTLYRTALESQGLNVRAVDADEAVRAGLSAAARAIWPL.

The protein belongs to the DgoK family.

The enzyme catalyses 2-dehydro-3-deoxy-D-galactonate + ATP = 2-dehydro-3-deoxy-6-phospho-D-galactonate + ADP + H(+). The protein operates within carbohydrate acid metabolism; D-galactonate degradation; D-glyceraldehyde 3-phosphate and pyruvate from D-galactonate: step 2/3. Functionally, involved in the degradation of galactose via the DeLey-Doudoroff pathway. The sequence is that of Probable 2-dehydro-3-deoxygalactonokinase DgoK1 (dgoK1) from Rhizobium meliloti (strain 1021) (Ensifer meliloti).